The sequence spans 134 residues: Interleukin-5 (134 aa).

A signal peptide spans 1-21 (MRMLLNLSLLALGAAYVSAFA). N-linked (GlcNAc...) asparagine glycosylation is found at Asn76 and Asn90.

It belongs to the IL-5 family. In terms of assembly, homodimer; disulfide-linked. Interacts with IL5RA. Interacts with CSF2RB.

The protein resides in the secreted. Its function is as follows. Homodimeric cytokine expressed predominantly by T-lymphocytes and NK cells that plays an important role in the survival, differentiation, and chemotaxis of eosinophils. Also acts on activated and resting B-cells to induce immunoglobulin production, growth, and differentiation. Mechanistically, exerts its biological effects through a receptor composed of IL5RA subunit and the cytokine receptor common subunit beta/CSF2RB. Binding to the receptor leads to activation of various kinases including LYN, SYK and JAK2 and thereby propagates signals through the RAS-MAPK and JAK-STAT5 pathways respectively. In Canis lupus familiaris (Dog), this protein is Interleukin-5 (IL5).